A 486-amino-acid chain; its full sequence is Adenosylhomocysteinase (486 aa).

The substrate site is built by Thr63, Asp147, and Glu209. An NAD(+)-binding site is contributed by 210 to 212; that stretch reads TTT. Residues Lys239 and Asp243 each contribute to the substrate site. NAD(+) is bound by residues Asn244, 273–278, Glu296, Asn331, 352–354, and Asn400; these read GYGDVG and IGH.

The protein belongs to the adenosylhomocysteinase family. The cofactor is NAD(+).

It carries out the reaction S-adenosyl-L-homocysteine + H2O = L-homocysteine + adenosine. Its pathway is amino-acid biosynthesis; L-homocysteine biosynthesis; L-homocysteine from S-adenosyl-L-homocysteine: step 1/1. In terms of biological role, adenosylhomocysteine is a competitive inhibitor of S-adenosyl-L-methionine-dependent methyl transferase reactions; therefore adenosylhomocysteinase may play a key role in the control of methylations via regulation of the intracellular concentration of adenosylhomocysteine. This chain is Adenosylhomocysteinase, found in Trichomonas vaginalis.